Here is a 130-residue protein sequence, read N- to C-terminus: MSDTWLDKVHWTPDGLVPVIAQEAGTNKVLMFAWMNRESLRLTAETGQAVYWSRSRNRLWHKGEESGHVQKVHEIRLDCDEDVILILVEQVGGIACHTGRHNCFFQKLEQDGWVTDQAIIKNPEDIYHHE.

Aspartate 78 is a Mg(2+) binding site. A Zn(2+)-binding site is contributed by cysteine 79. Residues aspartate 80 and aspartate 82 each coordinate Mg(2+). Residues cysteine 96 and cysteine 103 each coordinate Zn(2+).

It belongs to the PRA-CH family. As to quaternary structure, homodimer. Mg(2+) is required as a cofactor. Zn(2+) serves as cofactor.

Its subcellular location is the cytoplasm. The enzyme catalyses 1-(5-phospho-beta-D-ribosyl)-5'-AMP + H2O = 1-(5-phospho-beta-D-ribosyl)-5-[(5-phospho-beta-D-ribosylamino)methylideneamino]imidazole-4-carboxamide. It functions in the pathway amino-acid biosynthesis; L-histidine biosynthesis; L-histidine from 5-phospho-alpha-D-ribose 1-diphosphate: step 3/9. Catalyzes the hydrolysis of the adenine ring of phosphoribosyl-AMP. The protein is Phosphoribosyl-AMP cyclohydrolase of Methylobacillus flagellatus (strain ATCC 51484 / DSM 6875 / VKM B-1610 / KT).